We begin with the raw amino-acid sequence, 79 residues long: MNGFGRLEHFSGAVYEGQFKDNMFHGLGTYTFPNGAKYTGNFNENRVEGEGEYTDIQGLEWSGNFHFTAAPDLKLKLHM.

MORN repeat units follow at residues 15–36 (YEGQ…PNGA) and 38–55 (YTGN…EYTD).

The protein localises to the cytoplasmic vesicle. It is found in the secretory vesicle. It localises to the acrosome. Its subcellular location is the nucleus. Its function is as follows. Might have a role in spermatogenesis. The polypeptide is MORN repeat-containing protein 2 (Homo sapiens (Human)).